The following is a 153-amino-acid chain: Ribosome maturation factor RimP (153 aa).

It belongs to the RimP family.

Its subcellular location is the cytoplasm. In terms of biological role, required for maturation of 30S ribosomal subunits. The protein is Ribosome maturation factor RimP of Christiangramia forsetii (strain DSM 17595 / CGMCC 1.15422 / KT0803) (Gramella forsetii).